Here is a 312-residue protein sequence, read N- to C-terminus: Protein-glutamate methylesterase/protein-glutamine glutaminase (312 aa).

The 118-residue stretch at 5–122 folds into the Response regulatory domain; it reads RVLSVDDSAL…REGMLAYSEM (118 aa). A 4-aspartylphosphate modification is found at D56. In terms of domain architecture, CheB-type methylesterase spans 152–307; that stretch reads LLSSEKLIAI…QQMLAKISAG (156 aa). Residues S164, H190, and D249 contribute to the active site.

It belongs to the CheB family. In terms of processing, phosphorylated by CheA. Phosphorylation of the N-terminal regulatory domain activates the methylesterase activity.

It is found in the cytoplasm. It carries out the reaction [protein]-L-glutamate 5-O-methyl ester + H2O = L-glutamyl-[protein] + methanol + H(+). The enzyme catalyses L-glutaminyl-[protein] + H2O = L-glutamyl-[protein] + NH4(+). Involved in chemotaxis. Part of a chemotaxis signal transduction system that modulates chemotaxis in response to various stimuli. Catalyzes the demethylation of specific methylglutamate residues introduced into the chemoreceptors (methyl-accepting chemotaxis proteins or MCP) by CheR. Also mediates the irreversible deamidation of specific glutamine residues to glutamic acid. The sequence is that of Protein-glutamate methylesterase/protein-glutamine glutaminase from Shigella boydii serotype 4 (strain Sb227).